A 410-amino-acid chain; its full sequence is Elongation factor Tu, chloroplastic (410 aa).

Residues 10–213 form the tr-type G domain; that stretch reads KPHLNIGTIG…TVDEYIPTPK (204 aa). Positions 19–26 are G1; the sequence is GHVDHGKT. 19–26 is a binding site for GTP; it reads GHVDHGKT. A Mg(2+)-binding site is contributed by threonine 26. A G2 region spans residues 60–64; that stretch reads GITIN. Residues 81–84 are G3; sequence DCPG. Residues 81–85 and 136–139 contribute to the GTP site; these read DCPGH and NKAD. Residues 136 to 139 form a G4 region; it reads NKAD. The segment at 174 to 176 is G5; it reads SAI.

Belongs to the TRAFAC class translation factor GTPase superfamily. Classic translation factor GTPase family. EF-Tu/EF-1A subfamily.

It localises to the plastid. It is found in the chloroplast. The enzyme catalyses GTP + H2O = GDP + phosphate + H(+). In terms of biological role, GTP hydrolase that promotes the GTP-dependent binding of aminoacyl-tRNA to the A-site of ribosomes during protein biosynthesis. This is Elongation factor Tu, chloroplastic (tufA) from Codium fragile (Dead man's fingers).